We begin with the raw amino-acid sequence, 83 residues long: U-actitoxin-Aeq6b (83 aa).

The first 20 residues, 1-20, serve as a signal peptide directing secretion; the sequence is MIYKAVFVCLVLVLLGDVFC. The propeptide occupies 21 to 36; that stretch reads SPRNSGGGTLNDNPFE. Pro82 is modified (proline amide).

Contains 3 disulfide bonds. As to expression, expressed by acrorhagi.

It localises to the secreted. The protein localises to the nematocyst. Its function is as follows. Toxin. The protein is U-actitoxin-Aeq6b of Actinia equina (Beadlet anemone).